The primary structure comprises 171 residues: Endoribonuclease YbeY (171 aa).

Zn(2+) is bound by residues histidine 115, histidine 119, and histidine 125.

This sequence belongs to the endoribonuclease YbeY family. It depends on Zn(2+) as a cofactor.

It is found in the cytoplasm. Functionally, single strand-specific metallo-endoribonuclease involved in late-stage 70S ribosome quality control and in maturation of the 3' terminus of the 16S rRNA. The protein is Endoribonuclease YbeY of Tropheryma whipplei (strain TW08/27) (Whipple's bacillus).